The sequence spans 257 residues: V-type proton ATPase subunit D (257 aa).

Residues 211 to 233 (KKKDLKAKEAQKEENSANKTIME) are disordered. A compositionally biased stretch (basic and acidic residues) spans 216–226 (KAKEAQKEENS).

This sequence belongs to the V-ATPase D subunit family. V-ATPase is a heteromultimeric enzyme composed of a peripheral catalytic V1 complex (components A to H) attached to an integral membrane V0 proton pore complex (components: a, c, c', c'' and d).

Its function is as follows. Subunit of the peripheral V1 complex of vacuolar ATPase. Vacuolar ATPase is responsible for acidifying a variety of intracellular compartments in eukaryotic cells, thus providing most of the energy required for transport processes in the vacuolar system. The polypeptide is V-type proton ATPase subunit D (atp6v1d) (Dictyostelium discoideum (Social amoeba)).